A 127-amino-acid chain; its full sequence is Small ribosomal subunit protein uS13 (127 aa).

Residues 97-127 (PVRGQRTKTNARTRKGPRKTVAGKKGVKDLR) form a disordered region. Positions 101-118 (QRTKTNARTRKGPRKTVA) are enriched in basic residues.

It belongs to the universal ribosomal protein uS13 family. In terms of assembly, part of the 30S ribosomal subunit. Forms a loose heterodimer with protein S19. Forms two bridges to the 50S subunit in the 70S ribosome.

In terms of biological role, located at the top of the head of the 30S subunit, it contacts several helices of the 16S rRNA. In the 70S ribosome it contacts the 23S rRNA (bridge B1a) and protein L5 of the 50S subunit (bridge B1b), connecting the 2 subunits; these bridges are implicated in subunit movement. Contacts the tRNAs in the A and P-sites. In Rhodopirellula baltica (strain DSM 10527 / NCIMB 13988 / SH1), this protein is Small ribosomal subunit protein uS13.